We begin with the raw amino-acid sequence, 245 residues long: AA9 family lytic polysaccharide monooxygenase B (245 aa).

Positions 1–18 (MKSAIFAAAVLGAAGVSA) are cleaved as a signal peptide. Residues H19 and H105 each contribute to the Cu(2+) site. Cysteines 116 and 120 form a disulfide. O2 is bound by residues H179 and Q188. Y190 lines the Cu(2+) pocket.

Belongs to the polysaccharide monooxygenase AA9 family. It depends on Cu(2+) as a cofactor.

The protein resides in the secreted. It carries out the reaction [(1-&gt;4)-beta-D-glucosyl]n+m + reduced acceptor + O2 = 4-dehydro-beta-D-glucosyl-[(1-&gt;4)-beta-D-glucosyl]n-1 + [(1-&gt;4)-beta-D-glucosyl]m + acceptor + H2O.. Its function is as follows. Lytic polysaccharide monooxygenase (LPMO) that depolymerizes crystalline and amorphous polysaccharides via the oxidation of scissile alpha- or beta-(1-4)-glycosidic bonds, yielding C1 or C4 oxidation products. Catalysis by LPMOs requires the reduction of the active-site copper from Cu(II) to Cu(I) by a reducing agent and H(2)O(2) or O(2) as a cosubstrate. Active on hemicelluloses, including xylan, glucomannan, and xyloglucan. Has no activity on ivory nut mannan (INM), a linear beta-1,4-linked mannan without substitutions. This Malbranchea cinnamomea (Thermophilic fungus) protein is AA9 family lytic polysaccharide monooxygenase B.